Consider the following 431-residue polypeptide: UDP-N-acetylmuramate--L-alanine ligase (431 aa).

Residue 108–114 coordinates ATP; it reads GSHGKTS.

Belongs to the MurCDEF family.

Its subcellular location is the cytoplasm. The catalysed reaction is UDP-N-acetyl-alpha-D-muramate + L-alanine + ATP = UDP-N-acetyl-alpha-D-muramoyl-L-alanine + ADP + phosphate + H(+). It participates in cell wall biogenesis; peptidoglycan biosynthesis. Cell wall formation. The sequence is that of UDP-N-acetylmuramate--L-alanine ligase from Macrococcus caseolyticus (strain JCSC5402) (Macrococcoides caseolyticum).